Here is a 429-residue protein sequence, read N- to C-terminus: MSQVSERAINAGLASADPEISRLIDQERHRQETHLELIASENFASQAVMQAQGSVLTNKYAEGLPAKRYYGGCEHVDAIETLAIERAKQLFDAAWANVQPHSGAQANFAVFLALLKPGDTIMGLDLSHGGHLTHGSPVNVSGKWFNVVQYGVDPTTQRLDMEAIRKLALEHKPKLIVCGYSAYPRTIDFAAFRSIADEVGAFLLADMAHIAGLVAAGVHPSPVPHCDVVTTTTHKTLRGPRGGLILCRDAEFAKKFDKAVFPGTQGGPLEHVIAAKAVAFGEALQPSFKTYSQQVVANAGALAEQLISRGINVVSGGTDNHVVLLDLRSIGMTGKVADLLVSDVHITANKNTVPFDPESPFVTSGLRLGTAALTTRGFDVDAFREVADVIADRLHHPEDDAIRQRCLERVSILCSRFPLYADSKEPALV.

(6S)-5,6,7,8-tetrahydrofolate-binding positions include Leu-126 and Gly-130–Leu-132. Lys-235 bears the N6-(pyridoxal phosphate)lysine mark. Ser-359 to Phe-361 is a binding site for (6S)-5,6,7,8-tetrahydrofolate.

Belongs to the SHMT family. As to quaternary structure, homodimer. Requires pyridoxal 5'-phosphate as cofactor.

It is found in the cytoplasm. It carries out the reaction (6R)-5,10-methylene-5,6,7,8-tetrahydrofolate + glycine + H2O = (6S)-5,6,7,8-tetrahydrofolate + L-serine. Its pathway is one-carbon metabolism; tetrahydrofolate interconversion. It functions in the pathway amino-acid biosynthesis; glycine biosynthesis; glycine from L-serine: step 1/1. Catalyzes the reversible interconversion of serine and glycine with tetrahydrofolate (THF) serving as the one-carbon carrier. This reaction serves as the major source of one-carbon groups required for the biosynthesis of purines, thymidylate, methionine, and other important biomolecules. Also exhibits THF-independent aldolase activity toward beta-hydroxyamino acids, producing glycine and aldehydes, via a retro-aldol mechanism. The chain is Serine hydroxymethyltransferase from Synechococcus sp. (strain CC9902).